The sequence spans 492 residues: MGGRRGPNRTSYYRNPLCEPGSSGASGGGHSSSASVSSVRSRSRTTSGTGLSSPPLAAQTVVPLQHCKIPELPVQASILFELQLFFCQLIALFVHYINIYKTVWWYPPSHPPSHTSLNFHLIDFNLLMVTAIVLGRRFIGSIVKEASQRGKVSLFRSILLFLTRFTVLTATGWSLCRSLIHLFRTYSFLNLLFLCYPFGMYIPFLQLNYDLRKTNLFTHMASMGPREAVSGLARSRDYFLTLRETWKQHTRQLYGPEAMPTHACCLSPSLIRNEVEFLKMDFNWRMKEVLVSSMLSAYYVAFVPVWFVKNTHYYDKRWSCELFLLVSISTSVILMQHLLPASYCDLLHKAAAHLGCWQKVDPALCSNVLQHPWTEECMWPQGVLVKHSKNVYKAVGHYNVAIPSDVSHFRFHFFFSNPLRILNILLLLEGAVIVYQLYSLMSSEKWHQTISLALILFSNYYAFFKLLRDRLVLGKAYSYSASPQRDLDHRFS.

The tract at residues 1–53 is disordered; it reads MGGRRGPNRTSYYRNPLCEPGSSGASGGGHSSSASVSSVRSRSRTTSGTGLSS. A glycan (N-linked (GlcNAc...) asparagine) is linked at Asn-8. Low complexity predominate over residues 31–53; the sequence is SSSASVSSVRSRSRTTSGTGLSS. 8 helical membrane-spanning segments follow: residues 77 to 97, 115 to 135, 153 to 175, 185 to 205, 288 to 308, 322 to 342, 421 to 441, and 447 to 467; these read SILF…VHYI, TSLN…IVLG, SLFR…GWSL, TYSF…IPFL, EVLV…VWFV, LFLL…LPAS, ILNI…YSLM, and HQTI…FKLL.

Belongs to the TMEM39 family.

It localises to the endoplasmic reticulum membrane. In terms of biological role, may protect the cells against DNA damage caused by exposure to the cold-warming stress and facilitates tissue damage repair during the recovery phase. The sequence is that of Transmembrane protein 39B from Mus musculus (Mouse).